The following is a 449-amino-acid chain: Packaging protein 1 (449 aa).

The tract at residues 1 to 78 is disordered; the sequence is METRGRRPAA…PAKRGDMLDR (78 aa). Residue 171 to 178 participates in ATP binding; the sequence is GPTGCGKS. The DNA-binding stretch occupies residues 440-449; the sequence is RAYRARKTPK.

It belongs to the adenoviridae packaging protein 1 family. In terms of assembly, homodimer. Part of a genome packaging complex composed of packaging proteins 1, 2 and 3; this complex specifically binds to the packaging sequence on the left end of viral genomic DNA and performs packaging of the viral genome. Interacts with protein 33K.

The protein localises to the virion. Its subcellular location is the host nucleus. It localises to the host nucleoplasm. It is found in the host nucleolus. Its function is as follows. Component of the packaging machinery which encapsidates the viral DNA into preformed capsids and transcriptional activator of the viral major late promoter (MLP). Binds, along with packaging proteins 2 and 3, to the specific packaging sequence on the left end of viral genomic DNA and displays ATPase activity thereby providing the power stroke of the packaging machinery. The activity of packaging protein IVa2 is stimulated by protein 33K which acts as a terminase. May be the protein that pumps DNA into the capsid powered by ATP hydrolysis. Specifically binds to the 5'-CG-3' nucleotides of the repeats making up the packaging sequence. Component of the DEF-A and DEF-B transcription factors that bind downstream elements of the major late promoter (MLP), and stimulate transcription from the MLP after initiation of viral DNA replication. DEF-A is a heterodimer packaging proteins 1 and 2 and DEF-B is a homodimer of packaging protein 1. This is Packaging protein 1 from Human adenovirus C serotype 5 (HAdV-5).